Reading from the N-terminus, the 331-residue chain is 6-phosphogluconolactonase (331 aa).

Lys287 is subject to N6-acetyllysine.

Belongs to the cycloisomerase 2 family.

The enzyme catalyses 6-phospho-D-glucono-1,5-lactone + H2O = 6-phospho-D-gluconate + H(+). Its pathway is carbohydrate degradation; pentose phosphate pathway; D-ribulose 5-phosphate from D-glucose 6-phosphate (oxidative stage): step 2/3. Its function is as follows. Catalyzes the hydrolysis of 6-phosphogluconolactone to 6-phosphogluconate. In Escherichia coli O139:H28 (strain E24377A / ETEC), this protein is 6-phosphogluconolactonase.